Reading from the N-terminus, the 328-residue chain is Malate dehydrogenase (328 aa).

11–17 (GAAGQIG) serves as a coordination point for NAD(+). 2 residues coordinate substrate: R94 and R100. Residues N107, Q114, and 131-133 (VGN) contribute to the NAD(+) site. 2 residues coordinate substrate: N133 and R164. H189 acts as the Proton acceptor in catalysis.

The protein belongs to the LDH/MDH superfamily. MDH type 2 family.

It catalyses the reaction (S)-malate + NAD(+) = oxaloacetate + NADH + H(+). Functionally, catalyzes the reversible oxidation of malate to oxaloacetate. This chain is Malate dehydrogenase, found in Xanthomonas oryzae pv. oryzae (strain PXO99A).